Reading from the N-terminus, the 192-residue chain is Imidazole glycerol phosphate synthase subunit HisH (192 aa).

In terms of domain architecture, Glutamine amidotransferase type-1 spans 1–192 (MIAIIDYGLG…QALKGGFIND (192 aa)). Cysteine 77 (nucleophile) is an active-site residue. Active-site residues include histidine 169 and glutamate 171.

As to quaternary structure, heterodimer of HisH and HisF.

It localises to the cytoplasm. It carries out the reaction 5-[(5-phospho-1-deoxy-D-ribulos-1-ylimino)methylamino]-1-(5-phospho-beta-D-ribosyl)imidazole-4-carboxamide + L-glutamine = D-erythro-1-(imidazol-4-yl)glycerol 3-phosphate + 5-amino-1-(5-phospho-beta-D-ribosyl)imidazole-4-carboxamide + L-glutamate + H(+). It catalyses the reaction L-glutamine + H2O = L-glutamate + NH4(+). The protein operates within amino-acid biosynthesis; L-histidine biosynthesis; L-histidine from 5-phospho-alpha-D-ribose 1-diphosphate: step 5/9. Its function is as follows. IGPS catalyzes the conversion of PRFAR and glutamine to IGP, AICAR and glutamate. The HisH subunit catalyzes the hydrolysis of glutamine to glutamate and ammonia as part of the synthesis of IGP and AICAR. The resulting ammonia molecule is channeled to the active site of HisF. The chain is Imidazole glycerol phosphate synthase subunit HisH from Staphylococcus epidermidis (strain ATCC 35984 / DSM 28319 / BCRC 17069 / CCUG 31568 / BM 3577 / RP62A).